A 127-amino-acid polypeptide reads, in one-letter code: Glycine cleavage system H protein (127 aa).

Residues 22–104 (QVVIGITHFA…YEGAWMVKVE (83 aa)) form the Lipoyl-binding domain. Position 63 is an N6-lipoyllysine (lysine 63).

The protein belongs to the GcvH family. As to quaternary structure, the glycine cleavage system is composed of four proteins: P, T, L and H. The cofactor is (R)-lipoate.

Functionally, the glycine cleavage system catalyzes the degradation of glycine. The H protein shuttles the methylamine group of glycine from the P protein to the T protein. Its function is as follows. Is also involved in protein lipoylation via its role as an octanoyl/lipoyl carrier protein intermediate. The sequence is that of Glycine cleavage system H protein from Bacillus cytotoxicus (strain DSM 22905 / CIP 110041 / 391-98 / NVH 391-98).